Reading from the N-terminus, the 216-residue chain is Ribosome maturation factor RimP (216 aa).

Belongs to the RimP family.

Its subcellular location is the cytoplasm. In terms of biological role, required for maturation of 30S ribosomal subunits. The polypeptide is Ribosome maturation factor RimP (Bartonella henselae (strain ATCC 49882 / DSM 28221 / CCUG 30454 / Houston 1) (Rochalimaea henselae)).